We begin with the raw amino-acid sequence, 363 residues long: NAD(P)H-quinone oxidoreductase subunit 1, chloroplastic (363 aa).

Transmembrane regions (helical) follow at residues 30–50, 98–118, 127–147, 248–268, 300–320, and 336–356; these read LVPI…IVWL, FSIG…VIPF, LSIG…GLLM, YSGI…LVSS, VFGT…FLFI, and LLNL…LLTT.

It belongs to the complex I subunit 1 family. NDH is composed of at least 16 different subunits, 5 of which are encoded in the nucleus.

The protein localises to the plastid. It is found in the chloroplast thylakoid membrane. The enzyme catalyses a plastoquinone + NADH + (n+1) H(+)(in) = a plastoquinol + NAD(+) + n H(+)(out). The catalysed reaction is a plastoquinone + NADPH + (n+1) H(+)(in) = a plastoquinol + NADP(+) + n H(+)(out). In terms of biological role, NDH shuttles electrons from NAD(P)H:plastoquinone, via FMN and iron-sulfur (Fe-S) centers, to quinones in the photosynthetic chain and possibly in a chloroplast respiratory chain. The immediate electron acceptor for the enzyme in this species is believed to be plastoquinone. Couples the redox reaction to proton translocation, and thus conserves the redox energy in a proton gradient. This chain is NAD(P)H-quinone oxidoreductase subunit 1, chloroplastic, found in Drimys granadensis.